Consider the following 183-residue polypeptide: uncharacterized protein (183 aa).

Residues 7–23 traverse the membrane as a helical segment; that stretch reads LFFTALCFGLTGCIAPP.

Its subcellular location is the membrane. This is an uncharacterized protein from Haemophilus influenzae (strain ATCC 51907 / DSM 11121 / KW20 / Rd).